A 683-amino-acid polypeptide reads, in one-letter code: Methionine--tRNA ligase (683 aa).

Positions Pro14–His24 match the 'HIGH' region motif. Zn(2+) is bound by residues Cys145, Cys148, Cys158, and Cys161. The 'KMSKS' region signature appears at Lys331 to Ser335. An ATP-binding site is contributed by Lys334. The tRNA-binding domain occupies Ala581–Lys683.

The protein belongs to the class-I aminoacyl-tRNA synthetase family. MetG type 1 subfamily. Homodimer. The cofactor is Zn(2+).

It is found in the cytoplasm. It catalyses the reaction tRNA(Met) + L-methionine + ATP = L-methionyl-tRNA(Met) + AMP + diphosphate. In terms of biological role, is required not only for elongation of protein synthesis but also for the initiation of all mRNA translation through initiator tRNA(fMet) aminoacylation. The protein is Methionine--tRNA ligase of Pseudomonas fluorescens (strain SBW25).